A 509-amino-acid polypeptide reads, in one-letter code: ATP synthase subunit alpha (509 aa).

169–176 (GDRQTGKT) provides a ligand contact to ATP.

The protein belongs to the ATPase alpha/beta chains family. F-type ATPases have 2 components, CF(1) - the catalytic core - and CF(0) - the membrane proton channel. CF(1) has five subunits: alpha(3), beta(3), gamma(1), delta(1), epsilon(1). CF(0) has three main subunits: a(1), b(2) and c(9-12). The alpha and beta chains form an alternating ring which encloses part of the gamma chain. CF(1) is attached to CF(0) by a central stalk formed by the gamma and epsilon chains, while a peripheral stalk is formed by the delta and b chains.

It is found in the cell inner membrane. It catalyses the reaction ATP + H2O + 4 H(+)(in) = ADP + phosphate + 5 H(+)(out). Its function is as follows. Produces ATP from ADP in the presence of a proton gradient across the membrane. The alpha chain is a regulatory subunit. The sequence is that of ATP synthase subunit alpha from Methylorubrum populi (strain ATCC BAA-705 / NCIMB 13946 / BJ001) (Methylobacterium populi).